Reading from the N-terminus, the 236-residue chain is tRNA (guanine-N(1)-)-methyltransferase (236 aa).

S-adenosyl-L-methionine contacts are provided by residues Gly110 and 129–134 (LGDFVL).

Belongs to the RNA methyltransferase TrmD family. Homodimer.

The protein localises to the cytoplasm. The catalysed reaction is guanosine(37) in tRNA + S-adenosyl-L-methionine = N(1)-methylguanosine(37) in tRNA + S-adenosyl-L-homocysteine + H(+). Its function is as follows. Specifically methylates guanosine-37 in various tRNAs. This is tRNA (guanine-N(1)-)-methyltransferase from Clostridium perfringens (strain ATCC 13124 / DSM 756 / JCM 1290 / NCIMB 6125 / NCTC 8237 / Type A).